Reading from the N-terminus, the 426-residue chain is MIRKEMIAMLLAGGQGSRLGVLTKNVAKPAVLYGGKYRIIDFSLSNCTNSGIDTVGVLTQYQPLKLNAHIGIGKPWDMDRIDGGVTILSPYLKAEMGEWFKGTANAVYQNIQYIDKYSPHYVIILSGDHIYKMDYSKMLDFHKENHADATISVINVPYEEASRYGIMNCHENGKIYEFEEKPKNPKSTLASMGVYIFTWSTLREYLIKDNECSDSVNDFGKNIIPAMLGDGKSMWAYQYSGYWRDVGTIQAFWESNMDLVSRVPQFNLFDPEWRIYTPNPVKPAHYIASSACVKKSIIAEGCSVHGTVINSILFPGAYIEEGAVIQDSIIMSNSRVCKNAYINRSIISEQAIIGEKARLGEGPDVPNEYKPGIYDSGITVVGEKSSIPADAVIGKNVMIDIGASAVDFTSLNVQSGKSVFKGGVAE.

Residues G165, 180 to 181, and S191 contribute to the alpha-D-glucose 1-phosphate site; that span reads EK.

It belongs to the bacterial/plant glucose-1-phosphate adenylyltransferase family. As to quaternary structure, homotetramer.

The catalysed reaction is alpha-D-glucose 1-phosphate + ATP + H(+) = ADP-alpha-D-glucose + diphosphate. Its pathway is glycan biosynthesis; glycogen biosynthesis. Involved in the biosynthesis of ADP-glucose, a building block required for the elongation reactions to produce glycogen. Catalyzes the reaction between ATP and alpha-D-glucose 1-phosphate (G1P) to produce pyrophosphate and ADP-Glc. This is Glucose-1-phosphate adenylyltransferase from Ruminiclostridium cellulolyticum (strain ATCC 35319 / DSM 5812 / JCM 6584 / H10) (Clostridium cellulolyticum).